The sequence spans 87 residues: Serine protease inhibitor Kazal-type 12 (87 aa).

An N-terminal signal peptide occupies residues 1–22 (MKPAGAFLLLISLACLFLSVDA). One can recognise a Kazal-like domain in the interval 26-87 (GGFQAFCSNY…KLGFKHEGKC (62 aa)). 3 cysteine pairs are disulfide-bonded: C32–C68, C46–C65, and C54–C87.

Expressed in epydiymis, in the caput.

The protein localises to the secreted. In terms of biological role, inhibits trypsin. The sequence is that of Serine protease inhibitor Kazal-type 12 (Spink12) from Mus musculus (Mouse).